Reading from the N-terminus, the 299-residue chain is Very long chain fatty acid elongase 5 (299 aa).

Methionine 1 bears the N-acetylmethionine mark. A run of 7 helical transmembrane segments spans residues 26–46 (WFLLDNYIPTFICSVIYLLIV), 64–84 (ILVVYNLGLTLLSLYMFCELV), 112–132 (VLWWYYFSKLIEFMDTFFFIL), 150–170 (MLNIWWFVMNWVPCGHSYFGA), 172–192 (LNSFIHVLMYSYYGLSSVLSM), 205–225 (GQLLQSVLTIIQTSCGVIWPC), and 226–246 (TFPLGWLYFQIGYMISLIALF). The disordered stretch occupies residues 262-299 (RKDHLKDHQNGSKAAVNGHTNSFSPLENNVKPRKLRKD). Over residues 279–288 (GHTNSFSPLE) the composition is skewed to polar residues. Phosphoserine is present on serine 285.

This sequence belongs to the ELO family. ELOVL5 subfamily. Interacts with TECR.

Its subcellular location is the endoplasmic reticulum membrane. It is found in the cell projection. The protein localises to the dendrite. The enzyme catalyses a very-long-chain acyl-CoA + malonyl-CoA + H(+) = a very-long-chain 3-oxoacyl-CoA + CO2 + CoA. The catalysed reaction is (6Z,9Z,12Z)-octadecatrienoyl-CoA + malonyl-CoA + H(+) = (8Z,11Z,14Z)-3-oxoeicosatrienoyl-CoA + CO2 + CoA. It carries out the reaction (9Z,12Z,15Z)-octadecatrienoyl-CoA + malonyl-CoA + H(+) = (11Z,14Z,17Z)-3-oxoeicosatrienoyl-CoA + CO2 + CoA. It catalyses the reaction (9Z)-hexadecenoyl-CoA + malonyl-CoA + H(+) = 3-oxo-(11Z)-octadecenoyl-CoA + CO2 + CoA. The enzyme catalyses (9Z)-octadecenoyl-CoA + malonyl-CoA + H(+) = 3-oxo-(11Z)-eicosenoyl-CoA + CO2 + CoA. The catalysed reaction is (11Z)-octadecenoyl-CoA + malonyl-CoA + H(+) = 3-oxo-(13Z)-eicosenoyl-CoA + CO2 + CoA. It carries out the reaction (9Z,12Z)-octadecadienoyl-CoA + malonyl-CoA + H(+) = (11Z,14Z)-3-oxoicosa-11,14-dienoyl-CoA + CO2 + CoA. It catalyses the reaction (6Z,9Z,12Z,15Z)-octadecatetraenoyl-CoA + malonyl-CoA + H(+) = (8Z,11Z,14Z,17Z)-3-oxoicosatetraenoyl-CoA + CO2 + CoA. The enzyme catalyses (5Z,8Z,11Z,14Z)-eicosatetraenoyl-CoA + malonyl-CoA + H(+) = (7Z,10Z,13Z,16Z)-3-oxodocosatetraenoyl-CoA + CO2 + CoA. The catalysed reaction is (5Z,8Z,11Z,14Z,17Z)-eicosapentaenoyl-CoA + malonyl-CoA + H(+) = 3-oxo-(7Z,10Z,13Z,16Z,19Z)-docosapentaenoyl-CoA + CO2 + CoA. It functions in the pathway lipid metabolism; polyunsaturated fatty acid biosynthesis. In terms of biological role, catalyzes the first and rate-limiting reaction of the four reactions that constitute the long-chain fatty acids elongation cycle. This endoplasmic reticulum-bound enzymatic process allows the addition of 2 carbons to the chain of long- and very long-chain fatty acids (VLCFAs) per cycle. Condensing enzyme that acts specifically toward polyunsaturated acyl-CoA with the higher activity toward C18:3(n-6) acyl-CoA. May participate in the production of monounsaturated and of polyunsaturated VLCFAs of different chain lengths that are involved in multiple biological processes as precursors of membrane lipids and lipid mediators. In conditions where the essential linoleic and alpha linoleic fatty acids are lacking it is also involved in the synthesis of Mead acid from oleic acid. This is Very long chain fatty acid elongase 5 from Pongo abelii (Sumatran orangutan).